Here is a 545-residue protein sequence, read N- to C-terminus: Bifunctional purine biosynthesis protein PurH (545 aa).

In terms of domain architecture, MGS-like spans 1–150; sequence MTNTNRPIRR…KNHATVAIVT (150 aa).

Belongs to the PurH family.

It carries out the reaction (6R)-10-formyltetrahydrofolate + 5-amino-1-(5-phospho-beta-D-ribosyl)imidazole-4-carboxamide = 5-formamido-1-(5-phospho-D-ribosyl)imidazole-4-carboxamide + (6S)-5,6,7,8-tetrahydrofolate. It catalyses the reaction IMP + H2O = 5-formamido-1-(5-phospho-D-ribosyl)imidazole-4-carboxamide. It participates in purine metabolism; IMP biosynthesis via de novo pathway; 5-formamido-1-(5-phospho-D-ribosyl)imidazole-4-carboxamide from 5-amino-1-(5-phospho-D-ribosyl)imidazole-4-carboxamide (10-formyl THF route): step 1/1. The protein operates within purine metabolism; IMP biosynthesis via de novo pathway; IMP from 5-formamido-1-(5-phospho-D-ribosyl)imidazole-4-carboxamide: step 1/1. In Bifidobacterium longum (strain NCC 2705), this protein is Bifunctional purine biosynthesis protein PurH.